We begin with the raw amino-acid sequence, 248 residues long: Probable septum site-determining protein MinC (248 aa).

The interval 94–125 (GMPPAMRGGQPAADFEAPAGEPQANPGAPEPQ) is disordered.

It belongs to the MinC family. As to quaternary structure, interacts with MinD and FtsZ.

Cell division inhibitor that blocks the formation of polar Z ring septums. Rapidly oscillates between the poles of the cell to destabilize FtsZ filaments that have formed before they mature into polar Z rings. Prevents FtsZ polymerization. This is Probable septum site-determining protein MinC from Brucella abortus (strain S19).